The primary structure comprises 442 residues: tRNA-2-methylthio-N(6)-dimethylallyladenosine synthase (442 aa).

One can recognise an MTTase N-terminal domain in the interval 3 to 120 (KKLYIETHGC…LPEMIDAARV (118 aa)). The [4Fe-4S] cluster site is built by cysteine 12, cysteine 49, cysteine 83, cysteine 157, cysteine 161, and cysteine 164. Positions 143–375 (RVDGPSAYVS…QHRLNQQGFE (233 aa)) constitute a Radical SAM core domain. Residues 378–442 (RQMVGSIQRI…PHSLRGSLLQ (65 aa)) enclose the TRAM domain.

It belongs to the methylthiotransferase family. MiaB subfamily. Monomer. Requires [4Fe-4S] cluster as cofactor.

It localises to the cytoplasm. It catalyses the reaction N(6)-dimethylallyladenosine(37) in tRNA + (sulfur carrier)-SH + AH2 + 2 S-adenosyl-L-methionine = 2-methylsulfanyl-N(6)-dimethylallyladenosine(37) in tRNA + (sulfur carrier)-H + 5'-deoxyadenosine + L-methionine + A + S-adenosyl-L-homocysteine + 2 H(+). Catalyzes the methylthiolation of N6-(dimethylallyl)adenosine (i(6)A), leading to the formation of 2-methylthio-N6-(dimethylallyl)adenosine (ms(2)i(6)A) at position 37 in tRNAs that read codons beginning with uridine. The sequence is that of tRNA-2-methylthio-N(6)-dimethylallyladenosine synthase from Pseudomonas syringae pv. syringae (strain B728a).